A 391-amino-acid polypeptide reads, in one-letter code: Rhizopuspepsin-2 (391 aa).

Positions 1 to 21 (MKLTLISSCVALAFMALATEA) are cleaved as a signal peptide. A propeptide spans 22–68 (APSGKKLSIPLTKNTNYKPSAKNAIQKALAKYHRFRTTSSSNSTSTE) (activation peptide). The region spanning 84–388 (YYGKVTVGTP…NQEVPEVQIA (305 aa)) is the Peptidase A1 domain. Residue aspartate 102 is part of the active site. Cysteine 115 and cysteine 118 are joined by a disulfide. Residue aspartate 285 is part of the active site. A disulfide bond links cysteine 319 and cysteine 352.

It belongs to the peptidase A1 family.

It carries out the reaction Hydrolysis of proteins with broad specificity similar to that of pepsin A, preferring hydrophobic residues at P1 and P1'. Clots milk and activates trypsinogen. Does not cleave 4-Gln-|-His-5, but does cleave 10-His-|-Leu-11 and 12-Val-|-Glu-13 in B chain of insulin.. The protein is Rhizopuspepsin-2 of Rhizopus niveus.